The sequence spans 488 residues: Proline--tRNA ligase (488 aa).

The protein belongs to the class-II aminoacyl-tRNA synthetase family. ProS type 3 subfamily. As to quaternary structure, homodimer.

The protein resides in the cytoplasm. It catalyses the reaction tRNA(Pro) + L-proline + ATP = L-prolyl-tRNA(Pro) + AMP + diphosphate. Functionally, catalyzes the attachment of proline to tRNA(Pro) in a two-step reaction: proline is first activated by ATP to form Pro-AMP and then transferred to the acceptor end of tRNA(Pro). The chain is Proline--tRNA ligase from Symbiobacterium thermophilum (strain DSM 24528 / JCM 14929 / IAM 14863 / T).